A 906-amino-acid chain; its full sequence is Protein translocase subunit SecA (906 aa).

ATP contacts are provided by residues Q86, 104 to 108 (GEGKT), and D499. Zn(2+)-binding residues include C890, C892, C901, and H902.

Belongs to the SecA family. Monomer and homodimer. Part of the essential Sec protein translocation apparatus which comprises SecA, SecYEG and auxiliary proteins SecDF-YajC and YidC. The cofactor is Zn(2+).

It is found in the cell inner membrane. Its subcellular location is the cytoplasm. The catalysed reaction is ATP + H2O + cellular proteinSide 1 = ADP + phosphate + cellular proteinSide 2.. Its function is as follows. Part of the Sec protein translocase complex. Interacts with the SecYEG preprotein conducting channel. Has a central role in coupling the hydrolysis of ATP to the transfer of proteins into and across the cell membrane, serving both as a receptor for the preprotein-SecB complex and as an ATP-driven molecular motor driving the stepwise translocation of polypeptide chains across the membrane. The sequence is that of Protein translocase subunit SecA from Rickettsia prowazekii (strain Madrid E).